Consider the following 431-residue polypeptide: GTPase Obg (431 aa).

In terms of domain architecture, Obg spans 1–158 (MFVDQVKVDV…LTIRMELKVL (158 aa)). An OBG-type G domain is found at 159–335 (ADVGLVGFPS…LLAKTADLLD (177 aa)). Residues 165-172 (GFPSVGKS), 190-194 (FTTLV), 212-215 (DLPG), 282-285 (TKMD), and 316-318 (SSI) each bind GTP. Residues S172 and T192 each contribute to the Mg(2+) site. One can recognise an OCT domain in the interval 353 to 431 (YTTEADADFS…ILDYSFQFMD (79 aa)).

Belongs to the TRAFAC class OBG-HflX-like GTPase superfamily. OBG GTPase family. In terms of assembly, monomer. Mg(2+) is required as a cofactor.

The protein resides in the cytoplasm. In terms of biological role, an essential GTPase which binds GTP, GDP and possibly (p)ppGpp with moderate affinity, with high nucleotide exchange rates and a fairly low GTP hydrolysis rate. Plays a role in control of the cell cycle, stress response, ribosome biogenesis and in those bacteria that undergo differentiation, in morphogenesis control. The sequence is that of GTPase Obg from Lactiplantibacillus plantarum (strain ATCC BAA-793 / NCIMB 8826 / WCFS1) (Lactobacillus plantarum).